The primary structure comprises 210 residues: Putative transmembrane protein DDB_G0267530 (210 aa).

Positions 1-40 (MGVEDQPQTQPQTQPQQQPQMGYQPQMGYQPQAQMGYQPQ) are disordered. A run of 2 helical transmembrane segments spans residues 119–139 (VIVF…FFFI) and 148–168 (TFGI…VIVV).

It is found in the membrane. The polypeptide is Putative transmembrane protein DDB_G0267530 (Dictyostelium discoideum (Social amoeba)).